The sequence spans 496 residues: Acetyltransferase adrJ (496 aa).

Catalysis depends on proton acceptor residues His174 and Asp421.

Belongs to the plant acyltransferase family. In terms of assembly, monomer.

Its pathway is secondary metabolite biosynthesis; terpenoid biosynthesis. In terms of biological role, acetyltransferase; part of the gene cluster that mediates the biosynthesis of andrastins, meroterpenoid compounds that exhibit inhibitory activity against ras farnesyltransferase, suggesting that they could be promising leads for antitumor agents. The first step of the pathway is the synthesis of 3,5-dimethylorsellinic acid (DMOA) by the polyketide synthase adrD via condensation of one acetyl-CoA starter unit with 3 malonyl-CoA units and 2 methylations. DMAO is then converted to farnesyl-DMAO by the prenyltransferase adrG. The methyltransferase adrK catalyzes the methylation of the carboxyl group of farnesyl-DMAO to farnesyl-DMAO methyl ester which is further converted to epoxyfarnesyl-DMAO methyl ester by the FAD-dependent monooxygenase adrH. The terpene cyclase adrI then catalyzes the carbon skeletal rearrangement to generate the andrastin E, the first compound in the pathway having the andrastin scaffold, with the tetracyclic ring system. The post-cyclization tailoring enzymes adrF, adrE, adrJ, and adrA, are involved in the conversion of andrastin E into andrastin A. The short chain dehydrogenase adrF is responsible for the oxidation of the C-3 a hydroxyl group of andrastin E to yield the corresponding ketone, andrastin D. The ketoreductase adrE stereoselectively reduces the carbonyl moiety to reverse the stereochemistry of the C-3 position to yield andrastin F. The acetyltransferase adrJ is the acetyltransferase that attaches the acetyl group to the C-3 hydroxyl group of andrastin F to yield andrastin C. Finally, the cytochrome P450 monooxygenase adrA catalyzes two sequential oxidation reactions of the C-23 methyl group, to generate the corresponding alcohol andrastin B, and aldehyde andrastin A. This chain is Acetyltransferase adrJ, found in Penicillium roqueforti.